Consider the following 107-residue polypeptide: Phosphoribosyl-ATP pyrophosphatase (107 aa).

It belongs to the PRA-PH family.

It is found in the cytoplasm. The catalysed reaction is 1-(5-phospho-beta-D-ribosyl)-ATP + H2O = 1-(5-phospho-beta-D-ribosyl)-5'-AMP + diphosphate + H(+). It functions in the pathway amino-acid biosynthesis; L-histidine biosynthesis; L-histidine from 5-phospho-alpha-D-ribose 1-diphosphate: step 2/9. The chain is Phosphoribosyl-ATP pyrophosphatase from Bacillus cereus (strain ATCC 14579 / DSM 31 / CCUG 7414 / JCM 2152 / NBRC 15305 / NCIMB 9373 / NCTC 2599 / NRRL B-3711).